We begin with the raw amino-acid sequence, 86 residues long: Small ribosomal subunit protein uS17 (86 aa).

It belongs to the universal ribosomal protein uS17 family. As to quaternary structure, part of the 30S ribosomal subunit.

Its function is as follows. One of the primary rRNA binding proteins, it binds specifically to the 5'-end of 16S ribosomal RNA. The chain is Small ribosomal subunit protein uS17 from Tropheryma whipplei (strain TW08/27) (Whipple's bacillus).